Here is a 513-residue protein sequence, read N- to C-terminus: GMP synthase [glutamine-hydrolyzing] (513 aa).

In terms of domain architecture, Glutamine amidotransferase type-1 spans 8 to 198 (KIIVLDYGSQ…ALNICGAKGN (191 aa)). The active-site Nucleophile is cysteine 85. Residues histidine 172 and glutamate 174 contribute to the active site. The GMPS ATP-PPase domain maps to 199-388 (WSMENFIDMQ…LGMPDEIVWR (190 aa)). 226 to 232 (SGGVDSS) is an ATP binding site.

In terms of assembly, homodimer.

The enzyme catalyses XMP + L-glutamine + ATP + H2O = GMP + L-glutamate + AMP + diphosphate + 2 H(+). The protein operates within purine metabolism; GMP biosynthesis; GMP from XMP (L-Gln route): step 1/1. Its function is as follows. Catalyzes the synthesis of GMP from XMP. This Lactococcus lactis subsp. lactis (strain IL1403) (Streptococcus lactis) protein is GMP synthase [glutamine-hydrolyzing] (guaA).